Consider the following 124-residue polypeptide: Small ribosomal subunit protein uS12c (124 aa).

This sequence belongs to the universal ribosomal protein uS12 family. In terms of assembly, part of the 30S ribosomal subunit.

The protein resides in the plastid. It localises to the chloroplast. In terms of biological role, with S4 and S5 plays an important role in translational accuracy. Located at the interface of the 30S and 50S subunits. This Cyanidium caldarium (Red alga) protein is Small ribosomal subunit protein uS12c (rps12).